Here is a 502-residue protein sequence, read N- to C-terminus: Probable cytochrome P450 554A1 (502 aa).

A helical transmembrane segment spans residues 3–20 (LLLFIFFLILFYYSVKYY). Cysteine 448 provides a ligand contact to heme.

Belongs to the cytochrome P450 family. It depends on heme as a cofactor.

The protein localises to the membrane. The sequence is that of Probable cytochrome P450 554A1 (cyp554A1) from Dictyostelium discoideum (Social amoeba).